Reading from the N-terminus, the 239-residue chain is Large ribosomal subunit protein uL2 (239 aa).

The segment at 205-224 (GGHQHCGRPKTVARGTSPGR) is disordered.

Belongs to the universal ribosomal protein uL2 family. As to quaternary structure, part of the 50S ribosomal subunit. Forms a bridge to the 30S subunit in the 70S ribosome.

In terms of biological role, one of the primary rRNA binding proteins. Required for association of the 30S and 50S subunits to form the 70S ribosome, for tRNA binding and peptide bond formation. It has been suggested to have peptidyltransferase activity; this is somewhat controversial. Makes several contacts with the 16S rRNA in the 70S ribosome. This Methanoculleus marisnigri (strain ATCC 35101 / DSM 1498 / JR1) protein is Large ribosomal subunit protein uL2.